The following is a 234-amino-acid chain: Thrombin-like enzyme ancrod (234 aa).

The Peptidase S1 domain maps to 1-227 (VIGGDECNIN…YRDWVNNVIA (227 aa)). 6 disulfide bridges follow: Cys7–Cys141, Cys28–Cys44, Cys78–Cys232, Cys120–Cys188, Cys152–Cys167, and Cys178–Cys203. N-linked (GlcNAc...) asparagine glycosylation occurs at Asn23. The active-site Charge relay system is His43. Asn79 carries N-linked (GlcNAc...) asparagine glycosylation. Asp88 functions as the Charge relay system in the catalytic mechanism. 2 N-linked (GlcNAc...) asparagine glycosylation sites follow: Asn99 and Asn148. The Charge relay system role is filled by Ser182. Residue Asn229 is glycosylated (N-linked (GlcNAc...) asparagine).

The protein belongs to the peptidase S1 family. Snake venom subfamily. Monomer. In terms of tissue distribution, expressed by the venom gland.

The protein resides in the secreted. It carries out the reaction Selective cleavage of Arg-|-Xaa bond in fibrinogen, to form fibrin, and release fibrinopeptide A. The specificity of further degradation of fibrinogen varies with species origin of the enzyme.. Thrombin-like snake venom serine protease that acts as an anticoagulant. It cleaves fibrinogen (FGA) to split off the A-fibrinopeptides (A, AY and AP), but not the B-fibrinopeptide. The resulting fibrin polymers are imperfectly formed and much smaller in size (1 to 2 um long) than the fibrin polymers produced by the action of thrombin. These ancrod-induced microthrombi are friable, unstable, urea-soluble and have significantly degraded alpha chains. They do not cross-link to form thrombi. They are markedly susceptible to digestion by plasmin and are rapidly removed from circulation by either reticuloendothelial phagocytosis or normal fibrinolysis, or both. Anticoagulation through the removal of fibrinogen from the blood is rapid, occurring within hours following its administration. It does not activate plasminogen and does not degrade preformed, fully cross-linked thrombin fibrin. It also reduces the level of plasminogen activator inhibitor (PAI) and may stimulate the release of tissue plasminogen activator (PLAT) from the endothelium. The profibrinolytic effect of these 2 actions appears to be limited to local microthrombus degradation. This chain is Thrombin-like enzyme ancrod, found in Calloselasma rhodostoma (Malayan pit viper).